A 146-amino-acid polypeptide reads, in one-letter code: Core protein OPG114 (146 aa).

Belongs to the orthopoxvirus OPG114 family. In terms of assembly, part of a complex composed of the kinase OPG054, OPG092, OPG100, OPG114, OPG115, OPG142 and OPG157.

The protein resides in the virion. Late protein which is part of a large complex required for early virion morphogenesis. This complex participates in the formation of virosomes and the incorporation of virosomal contents into nascent immature virions. This Monkeypox virus protein is Core protein OPG114 (OPG114).